The primary structure comprises 332 residues: Glycerol-3-phosphate dehydrogenase [NAD(P)+] (332 aa).

NADPH is bound by residues tryptophan 11, arginine 30, and lysine 108. 3 residues coordinate sn-glycerol 3-phosphate: lysine 108, glycine 137, and serine 139. Alanine 141 is a binding site for NADPH. Lysine 192, aspartate 245, serine 255, arginine 256, and asparagine 257 together coordinate sn-glycerol 3-phosphate. Lysine 192 functions as the Proton acceptor in the catalytic mechanism. Arginine 256 contributes to the NADPH binding site. Positions 280 and 282 each coordinate NADPH.

The protein belongs to the NAD-dependent glycerol-3-phosphate dehydrogenase family.

It is found in the cytoplasm. The enzyme catalyses sn-glycerol 3-phosphate + NAD(+) = dihydroxyacetone phosphate + NADH + H(+). It catalyses the reaction sn-glycerol 3-phosphate + NADP(+) = dihydroxyacetone phosphate + NADPH + H(+). The protein operates within membrane lipid metabolism; glycerophospholipid metabolism. In terms of biological role, catalyzes the reduction of the glycolytic intermediate dihydroxyacetone phosphate (DHAP) to sn-glycerol 3-phosphate (G3P), the key precursor for phospholipid synthesis. This is Glycerol-3-phosphate dehydrogenase [NAD(P)+] from Paraburkholderia phymatum (strain DSM 17167 / CIP 108236 / LMG 21445 / STM815) (Burkholderia phymatum).